The sequence spans 279 residues: Protease HtpX homolog (279 aa).

2 consecutive transmembrane segments (helical) span residues 6–26 and 28–48; these read TVALMTVLTLLLVWAGGMMGG and GGALFALIMAAVMNLGSYWFS. Histidine 127 serves as a coordination point for Zn(2+). Glutamate 128 is a catalytic residue. Position 131 (histidine 131) interacts with Zn(2+). Transmembrane regions (helical) follow at residues 137–157 and 177–197; these read ILIGSIAATIAGAISYLAHMA and LGLLLLIIFAPLAAMLVQMAI. Glutamate 202 serves as a coordination point for Zn(2+).

This sequence belongs to the peptidase M48B family. The cofactor is Zn(2+).

It localises to the cell inner membrane. In Syntrophotalea carbinolica (strain DSM 2380 / NBRC 103641 / GraBd1) (Pelobacter carbinolicus), this protein is Protease HtpX homolog.